A 251-amino-acid chain; its full sequence is Hydroxyacylglutathione hydrolase (251 aa).

Positions 53, 55, 57, 58, 110, 127, and 165 each coordinate Zn(2+).

It belongs to the metallo-beta-lactamase superfamily. Glyoxalase II family. In terms of assembly, monomer. It depends on Zn(2+) as a cofactor.

It catalyses the reaction an S-(2-hydroxyacyl)glutathione + H2O = a 2-hydroxy carboxylate + glutathione + H(+). Its pathway is secondary metabolite metabolism; methylglyoxal degradation; (R)-lactate from methylglyoxal: step 2/2. Its function is as follows. Thiolesterase that catalyzes the hydrolysis of S-D-lactoyl-glutathione to form glutathione and D-lactic acid. The protein is Hydroxyacylglutathione hydrolase of Escherichia coli (strain 55989 / EAEC).